Consider the following 265-residue polypeptide: Undecaprenyl-diphosphatase (265 aa).

8 helical membrane passes run 1–21 (MDFIHILALAILQGLTEFLPI), 39–61 (QGLAFDVAVHLGTLVAVISYFRL), 85–105 (LAWAVLLGTLPVGLVGIMLTE), 115–135 (LIIAWSTVGFGFLLAYADWAG), 149–169 (ILFIGLAQALALIPGTSRSGI), 187–207 (FSFLLAIPVILLAGGLAALDL), 218–238 (ALALGALISGLCAYACIHYFF), and 244–264 (IGMLPFAVYRLLLGALLFYLF).

It belongs to the UppP family.

The protein localises to the cell inner membrane. It catalyses the reaction di-trans,octa-cis-undecaprenyl diphosphate + H2O = di-trans,octa-cis-undecaprenyl phosphate + phosphate + H(+). In terms of biological role, catalyzes the dephosphorylation of undecaprenyl diphosphate (UPP). Confers resistance to bacitracin. This is Undecaprenyl-diphosphatase from Nitrosococcus oceani (strain ATCC 19707 / BCRC 17464 / JCM 30415 / NCIMB 11848 / C-107).